The chain runs to 322 residues: Thymidylate synthase (322 aa).

Residues R25 and 184–185 each bind dUMP; that span reads RR. Residue C204 is the Nucleophile of the active site. Residues 224–227, N235, and 265–267 each bind dUMP; these read RSGD and HIY. A (6R)-5,10-methylene-5,6,7,8-tetrahydrofolate-binding site is contributed by D227. A321 is a binding site for (6R)-5,10-methylene-5,6,7,8-tetrahydrofolate.

Belongs to the thymidylate synthase family. Bacterial-type ThyA subfamily. Homodimer.

The protein localises to the cytoplasm. It catalyses the reaction dUMP + (6R)-5,10-methylene-5,6,7,8-tetrahydrofolate = 7,8-dihydrofolate + dTMP. It participates in pyrimidine metabolism; dTTP biosynthesis. In terms of biological role, catalyzes the reductive methylation of 2'-deoxyuridine-5'-monophosphate (dUMP) to 2'-deoxythymidine-5'-monophosphate (dTMP) while utilizing 5,10-methylenetetrahydrofolate (mTHF) as the methyl donor and reductant in the reaction, yielding dihydrofolate (DHF) as a by-product. This enzymatic reaction provides an intracellular de novo source of dTMP, an essential precursor for DNA biosynthesis. The protein is Thymidylate synthase of Leuconostoc mesenteroides subsp. mesenteroides (strain ATCC 8293 / DSM 20343 / BCRC 11652 / CCM 1803 / JCM 6124 / NCDO 523 / NBRC 100496 / NCIMB 8023 / NCTC 12954 / NRRL B-1118 / 37Y).